Reading from the N-terminus, the 127-residue chain is Glycine cleavage system H protein (127 aa).

One can recognise a Lipoyl-binding domain in the interval K22–E104. At K63 the chain carries N6-lipoyllysine.

Belongs to the GcvH family. As to quaternary structure, the glycine cleavage system is composed of four proteins: P, T, L and H. (R)-lipoate is required as a cofactor.

Functionally, the glycine cleavage system catalyzes the degradation of glycine. The H protein shuttles the methylamine group of glycine from the P protein to the T protein. Is also involved in protein lipoylation via its role as an octanoyl/lipoyl carrier protein intermediate. The protein is Glycine cleavage system H protein of Geobacillus thermodenitrificans (strain NG80-2).